The sequence spans 533 residues: 1-aminocyclopropane-1-carboxylate synthase 5 (533 aa).

Residue lysine 358 is modified to N6-(pyridoxal phosphate)lysine.

Belongs to the class-I pyridoxal-phosphate-dependent aminotransferase family. Pyridoxal 5'-phosphate is required as a cofactor. In terms of tissue distribution, expressed in shoots and leaf blades. Expressed at low levels in leaf sheaths. Expressed in vasculature of roots and shoots.

The catalysed reaction is S-adenosyl-L-methionine = 1-aminocyclopropane-1-carboxylate + S-methyl-5'-thioadenosine + H(+). The protein operates within alkene biosynthesis; ethylene biosynthesis via S-adenosyl-L-methionine; ethylene from S-adenosyl-L-methionine: step 1/2. Functionally, catalyzes the formation of 1-aminocyclopropane-1-carboxylate, a direct precursor of ethylene in higher plants. The sequence is that of 1-aminocyclopropane-1-carboxylate synthase 5 from Oryza sativa subsp. japonica (Rice).